We begin with the raw amino-acid sequence, 284 residues long: 2-dehydro-3-deoxyphosphooctonate aldolase (284 aa).

It belongs to the KdsA family.

Its subcellular location is the cytoplasm. It carries out the reaction D-arabinose 5-phosphate + phosphoenolpyruvate + H2O = 3-deoxy-alpha-D-manno-2-octulosonate-8-phosphate + phosphate. Its pathway is carbohydrate biosynthesis; 3-deoxy-D-manno-octulosonate biosynthesis; 3-deoxy-D-manno-octulosonate from D-ribulose 5-phosphate: step 2/3. It participates in bacterial outer membrane biogenesis; lipopolysaccharide biosynthesis. This Salmonella enteritidis PT4 (strain P125109) protein is 2-dehydro-3-deoxyphosphooctonate aldolase.